The chain runs to 231 residues: 5'-methylthioadenosine/S-adenosylhomocysteine nucleosidase (231 aa).

The active-site Proton acceptor is the glutamate 12. Residues glycine 78, valine 153, and 174–175 contribute to the substrate site; that span reads ME. Aspartate 198 functions as the Proton donor in the catalytic mechanism.

It belongs to the PNP/UDP phosphorylase family. MtnN subfamily.

It carries out the reaction S-adenosyl-L-homocysteine + H2O = S-(5-deoxy-D-ribos-5-yl)-L-homocysteine + adenine. The enzyme catalyses S-methyl-5'-thioadenosine + H2O = 5-(methylsulfanyl)-D-ribose + adenine. It catalyses the reaction 5'-deoxyadenosine + H2O = 5-deoxy-D-ribose + adenine. Its pathway is amino-acid biosynthesis; L-methionine biosynthesis via salvage pathway; S-methyl-5-thio-alpha-D-ribose 1-phosphate from S-methyl-5'-thioadenosine (hydrolase route): step 1/2. Its function is as follows. Catalyzes the irreversible cleavage of the glycosidic bond in both 5'-methylthioadenosine (MTA) and S-adenosylhomocysteine (SAH/AdoHcy) to adenine and the corresponding thioribose, 5'-methylthioribose and S-ribosylhomocysteine, respectively. Also cleaves 5'-deoxyadenosine, a toxic by-product of radical S-adenosylmethionine (SAM) enzymes, into 5-deoxyribose and adenine. The protein is 5'-methylthioadenosine/S-adenosylhomocysteine nucleosidase of Aliivibrio fischeri (Vibrio fischeri).